The sequence spans 924 residues: DNA repair and recombination protein RDH54 (924 aa).

Basic and acidic residues predominate over residues 1–10; it reads MQIPKYENKP. Disordered stretches follow at residues 1-21 and 155-182; these read MQIP…GSNK and EALS…KNDG. Over residues 168–178 the composition is skewed to low complexity; the sequence is TTSTTETVPST. Residues 299 to 487 enclose the Helicase ATP-binding domain; the sequence is LENDSDISGC…FTIIDFINPG (189 aa). Residue 346 to 353 participates in ATP binding; that stretch reads IPLTGLCK. Positions 472–475 match the DEGH box motif; that stretch reads NDLN. Lysine 615 is covalently cross-linked (Glycyl lysine isopeptide (Lys-Gly) (interchain with G-Cter in ubiquitin)). Residues 631–790 enclose the Helicase C-terminal domain; it reads KLRVLMTLLE…DSEMRNKESS (160 aa).

This sequence belongs to the SNF2/RAD54 helicase family. As to quaternary structure, interacts with RAD51 and DMC1.

It localises to the nucleus. It carries out the reaction ATP + H2O = ADP + phosphate + H(+). Functionally, involved in the recombinational repair of double-strand breaks (DSB) in DNA during mitosis and meiosis. Has DNA dependent ATPase activity. Promotes D-loop (displacement loop) formation with RAD51 recombinase. Modifies the topology of double-stranded DNA during the D-loop reaction to facilitate the invasion of the homologous duplex molecule by the initiating single-stranded DNA substrate. Required for adaptation from G2/M checkpoint arrest induced by a double strand break, by participating in monitoring the extent of single-stranded DNA produced by resection of DNA ends. This role is distinct from its roles in recombination. Promotes colocalization of RAD51 and DMC1 during meiotic recombination. Involved in crossover interference. This is DNA repair and recombination protein RDH54 (RDH54) from Saccharomyces cerevisiae (strain AWRI1631) (Baker's yeast).